Reading from the N-terminus, the 172-residue chain is MASISLSSSTVPSLNSKESSGVSAFASRSISAVKFQFPVRRVRTGDLKFPSLSSTTRCTPRRIEAKKQTFDSFEDLLVNSDKPVLVDYYATWCGPCQFMVPILNEVSETLKDKIQVVKIDTEKYPSIANKYKIEALPTFILFKDGEPCDRFEGALTAKQLIQRIEDSLKVKP.

A chloroplast-targeting transit peptide spans methionine 1 to arginine 62. Residues isoleucine 63–lysine 169 form the Thioredoxin domain. Active-site nucleophile residues include cysteine 93 and cysteine 96. A disulfide bridge connects residues cysteine 93 and cysteine 96.

It belongs to the thioredoxin family. Plant Y-type subfamily. As to expression, expressed in roots and seeds.

It is found in the plastid. It localises to the chloroplast stroma. In terms of biological role, thiol-disulfide oxidoreductase that poorly activates chloroplastic malate dehydrogenase (NADP-MDH) and fructose-1,6-bisphosphatase. Provides reducing equivalents for peroxiredoxin Q. This Arabidopsis thaliana (Mouse-ear cress) protein is Thioredoxin Y1, chloroplastic.